Reading from the N-terminus, the 499-residue chain is Probable alkaline/neutral invertase F (499 aa).

A Phosphoserine modification is found at S11. T20 is subject to Phosphothreonine. S497 carries the phosphoserine modification.

The protein belongs to the glycosyl hydrolase 100 family.

It catalyses the reaction Hydrolysis of terminal non-reducing beta-D-fructofuranoside residues in beta-D-fructofuranosides.. Its function is as follows. Invertase that cleaves sucrose into glucose and fructose. This chain is Probable alkaline/neutral invertase F, found in Arabidopsis thaliana (Mouse-ear cress).